The chain runs to 263 residues: Zinc finger protein STAMENLESS 1 (263 aa).

The segment at 1-51 (MNSSRRQEGSPLDLNNLPDEFGKQTVESSTTTAASSAEASRVTKKKSNGGK) is disordered. The segment covering 25–40 (TVESSTTTAASSAEAS) has biased composition (low complexity). Residues 58 to 80 (YECRFCSLKFCKSQALGGHMNRH) form a C2H2-type zinc finger.

As to expression, expressed in leaf primordia, inflorescence meristem, rachis branch meristems, floral meristem and floral organ primordia.

It localises to the nucleus. Regulates floral organ identity and cell proliferation in the inner floral whorls. Probably specifies the identities of lodicule and stamen through positive regulation of MADS16 expression. May contribute to morphogenesis by suppressing OSH1 expression in the lateral organs. The protein is Zinc finger protein STAMENLESS 1 (SL1) of Oryza sativa subsp. japonica (Rice).